The sequence spans 176 residues: Myelin basic protein (176 aa).

Positions 1–11 (MASQKHSRGHG) are enriched in basic residues. The interval 1-176 (MASQKHSRGH…SRSSSPMARR (176 aa)) is disordered. Ala2 carries the N-acetylalanine modification. Ser7 carries the post-translational modification Phosphoserine. A citrulline mark is found at Arg25 and Arg33. Residue Ser58 is modified to Phosphoserine. Asn97 carries the post-translational modification Deamidated asparagine. Thr103 bears the Phosphothreonine mark. The residue at position 108 (Gln108) is a Deamidated glutamine. Arg111 carries the symmetric dimethylarginine modification. Position 117 is a phosphoserine (Ser117). Residues 134–153 (SLEHHKSSYKGYKDPHREGH) show a composition bias toward basic and acidic residues. The span at 166 to 176 (RSRSSSPMARR) shows a compositional bias: polar residues. Residues Ser167 and Ser171 each carry the phosphoserine modification. Arg176 carries the citrulline modification.

Belongs to the myelin basic protein family. In terms of assembly, homodimer. As in other animals, several charge isomers may be produced as a result of optional post-translational modifications, such as phosphorylation of serine or threonine residues, deamidation of glutamine or asparagine residues, citrullination and methylation of arginine residues.

The protein localises to the myelin membrane. In terms of biological role, is, with PLP, the most abundant protein component of the myelin membrane in the CNS. Plays a role in both the formation and stabilization of this compact multilayer arrangement of bilayers. Each splice variant and charge isomer may have a specialized function in the assembly of an optimized, biochemically functional myelin membrane. This is Myelin basic protein (mbp) from Xenopus laevis (African clawed frog).